The chain runs to 573 residues: Glucocorticoid modulatory element-binding protein 1 (573 aa).

Ala-2 carries the post-translational modification N-acetylalanine. The SAND domain occupies 82-166; that stretch reads TGTIEANEDM…RKMMDSGQID (85 aa). Cys-113 lines the Zn(2+) pocket. Lys-139, Lys-143, Lys-146, and Arg-157 together coordinate DNA. Positions 170, 174, and 178 each coordinate Zn(2+). The stretch at 321–367 forms a coiled coil; the sequence is LDNRRNQVEQGEEQFLYTLTDLERQLEEQKKQGQDHRLKSQTVQNVV. The interval 370 to 398 is disordered; it reads PVSTPKPPKRPRLQRPASTTVLSPSPPVQ.

Homodimer, and heterodimer of GMEB1 and GMEB2. GMEB1 and GMEB2 form the parvovirus initiator complex (PIF). Interacts with the glucocorticoid receptor (NR3C1) and NCOA2/TIF2. May interact with HSP27 and CREB-binding protein (CBP).

Its subcellular location is the nucleus. It is found in the cytoplasm. In terms of biological role, trans-acting factor that binds to glucocorticoid modulatory elements (GME) present in the TAT (tyrosine aminotransferase) promoter and increases sensitivity to low concentrations of glucocorticoids. Also binds to the transferrin receptor promoter. Essential auxiliary factor for the replication of parvoviruses. The sequence is that of Glucocorticoid modulatory element-binding protein 1 (GMEB1) from Homo sapiens (Human).